We begin with the raw amino-acid sequence, 300 residues long: N-acetylmuramic acid 6-phosphate etherase 2 (300 aa).

The region spanning 57-220 (ITAAFANGGR…TTGAMIRSGK (164 aa)) is the SIS domain. Glu-85 functions as the Proton donor in the catalytic mechanism. Glu-116 is an active-site residue.

Belongs to the GCKR-like family. MurNAc-6-P etherase subfamily. Homodimer.

It carries out the reaction N-acetyl-D-muramate 6-phosphate + H2O = N-acetyl-D-glucosamine 6-phosphate + (R)-lactate. Its pathway is amino-sugar metabolism; 1,6-anhydro-N-acetylmuramate degradation. The protein operates within amino-sugar metabolism; N-acetylmuramate degradation. It participates in cell wall biogenesis; peptidoglycan recycling. Functionally, specifically catalyzes the cleavage of the D-lactyl ether substituent of MurNAc 6-phosphate, producing GlcNAc 6-phosphate and D-lactate. Together with AnmK, is also required for the utilization of anhydro-N-acetylmuramic acid (anhMurNAc) either imported from the medium or derived from its own cell wall murein, and thus plays a role in cell wall recycling. The protein is N-acetylmuramic acid 6-phosphate etherase 2 of Vibrio parahaemolyticus serotype O3:K6 (strain RIMD 2210633).